Reading from the N-terminus, the 146-residue chain is Globin (146 aa).

At serine 1 the chain carries N-acetylserine. The 146-residue stretch at 1–146 (SLSGAEADLL…IIDALKKAGK (146 aa)) folds into the Globin domain. Histidine 95 contributes to the heme b binding site.

The protein belongs to the globin family. Monomer.

In Bursatella leachii (Ragged sea hare), this protein is Globin.